The primary structure comprises 1214 residues: NBPF family member NBPF1 (1214 aa).

A coiled-coil region spans residues 70–128 (MLRNERQFKEEKLAEQLKQAEELRQYKVLVHSQERELTQLREKLREGRDASRSLNQHLQ). Residues 162-200 (LSPENDEDEDEDVQVEEAEKVLESSAPREVQKAEESKVP) are disordered. Positions 165-177 (ENDEDEDEDVQVE) are enriched in acidic residues. The Olduvai 1 domain maps to 165 to 259 (ENDEDEDEDV…ECQDAVNILP (95 aa)). Basic and acidic residues predominate over residues 190-200 (EVQKAEESKVP). The stretch at 292–399 (NEKLHPQLAE…ASRSLNQHLQ (108 aa)) forms a coiled coil. Positions 433–471 (LSPENDEDEDEDVQVEEAEKVLESSAPREVQKAEESKVP) are disordered. Residues 436–448 (ENDEDEDEDVQVE) show a composition bias toward acidic residues. The region spanning 436–530 (ENDEDEDEDV…ECQDAVNILP (95 aa)) is the Olduvai 2 domain. A compositionally biased stretch (basic and acidic residues) spans 461–471 (EVQKAEESKVP). Residues 610-670 (KSMLRNERQF…ASCSLNQHLQ (61 aa)) adopt a coiled-coil conformation. 6 Olduvai domains span residues 707–799 (ENDN…HIIP), 800–888 (ENES…ATGP), 891–946 (SREL…LDMD), 947–1038 (EIEK…PPCP), 1041–1114 (SREL…RSTK), and 1116–1214 (RRRR…IFPQ). Disordered regions lie at residues 722–746 (EKVQ…EDSL) and 791–837 (WEDA…EGYS). Acidic residues-rich tracts occupy residues 801 to 810 (NESDDEEEEE) and 821 to 833 (ESEE…ESWD). Basic residues predominate over residues 1102-1121 (GKGKKRRGRRSTKKRRRRGR). The interval 1102–1136 (GKGKKRRGRRSTKKRRRRGRKEGEEDQNPPCPRLS) is disordered.

This sequence belongs to the NBPF family. Widely expressed. The only tissue which shows a weak expression is kidney.

It is found in the cytoplasm. This chain is NBPF family member NBPF1, found in Homo sapiens (Human).